Reading from the N-terminus, the 327-residue chain is Methionine import ATP-binding protein MetN (327 aa).

Positions 3–239 constitute an ABC transporter domain; it reads VELKNIEKIY…PKHAVTKELL (237 aa). 36 to 43 lines the ATP pocket; that stretch reads GYSGAGKS.

This sequence belongs to the ABC transporter superfamily. Methionine importer (TC 3.A.1.24) family. As to quaternary structure, the complex is composed of two ATP-binding proteins (MetN), two transmembrane proteins (MetI) and a solute-binding protein (MetQ).

The protein localises to the cell inner membrane. It carries out the reaction L-methionine(out) + ATP + H2O = L-methionine(in) + ADP + phosphate + H(+). The enzyme catalyses D-methionine(out) + ATP + H2O = D-methionine(in) + ADP + phosphate + H(+). Its function is as follows. Part of the ABC transporter complex MetNIQ involved in methionine import. Responsible for energy coupling to the transport system. The protein is Methionine import ATP-binding protein MetN of Helicobacter pylori (strain ATCC 700392 / 26695) (Campylobacter pylori).